Here is a 511-residue protein sequence, read N- to C-terminus: Xylose import ATP-binding protein XylG (511 aa).

2 ABC transporter domains span residues 6–244 (LEMR…VGRE) and 261–506 (FEAR…IGKP).

This sequence belongs to the ABC transporter superfamily. Xylose importer (TC 3.A.1.2.4) family. The complex is composed of two ATP-binding proteins (XylG), two transmembrane proteins (XylH) and a solute-binding protein (XylF).

The protein resides in the cell inner membrane. It carries out the reaction D-xylose(out) + ATP + H2O = D-xylose(in) + ADP + phosphate + H(+). Its function is as follows. Part of the ABC transporter complex XylFGH involved in xylose import. Responsible for energy coupling to the transport system. This chain is Xylose import ATP-binding protein XylG, found in Brucella melitensis biotype 1 (strain ATCC 23456 / CCUG 17765 / NCTC 10094 / 16M).